The chain runs to 130 residues: Nascent polypeptide-associated complex protein (130 aa).

Positions 8 to 75 constitute an NAC-A/B domain; it reads PKMMRQMQKM…AKNIKKDDIK (68 aa).

This sequence belongs to the NAC-alpha family. Homodimer. Interacts with the ribosome. Binds ribosomal RNA.

Contacts the emerging nascent chain on the ribosome. The chain is Nascent polypeptide-associated complex protein from Methanococcus aeolicus (strain ATCC BAA-1280 / DSM 17508 / OCM 812 / Nankai-3).